A 289-amino-acid polypeptide reads, in one-letter code: Glyceraldehyde-3-phosphate dehydrogenase (289 aa).

Residues aspartate 12 and arginine 57 each contribute to the NAD(+) site. D-glyceraldehyde 3-phosphate contacts are provided by residues 128–130 (SCT), threonine 159, 188–189 (TG), and arginine 211. Cysteine 129 serves as the catalytic Nucleophile.

It belongs to the glyceraldehyde-3-phosphate dehydrogenase family. Homotetramer.

It localises to the cytoplasm. The enzyme catalyses D-glyceraldehyde 3-phosphate + phosphate + NAD(+) = (2R)-3-phospho-glyceroyl phosphate + NADH + H(+). The protein operates within carbohydrate degradation; glycolysis; pyruvate from D-glyceraldehyde 3-phosphate: step 1/5. This chain is Glyceraldehyde-3-phosphate dehydrogenase (GPD), found in Amanita muscaria (Fly agaric).